Reading from the N-terminus, the 291-residue chain is Beta-lactamase OXY-1 (291 aa).

The first 24 residues, 1-24 (MLKSSWRKTALMAAAAVPLLLASG), serve as a signal peptide directing secretion. Ser73 serves as the catalytic Acyl-ester intermediate. 237–239 (KTG) contributes to the substrate binding site.

Belongs to the class-A beta-lactamase family.

The enzyme catalyses a beta-lactam + H2O = a substituted beta-amino acid. Functionally, hydrolyzes broad-spectrum beta-lactam antibiotics. Active against cephalosporins. This chain is Beta-lactamase OXY-1 (bla), found in Klebsiella oxytoca.